Consider the following 278-residue polypeptide: MSLALNPVAFNLGPFQVKWYGILMATGVLVATLMAINEGKKRHIMPDDFIDFLLWAVPIGFIGARIYYVVFEWGYFSQHPDQIIAIWNGGIAIYGGLIAGLIVLLIFCHQRMLPPFLMLDIIAPGVMAAQVIARWGNFMNQEAHGAKTTLSFLESLHLPHFIIQQMYINGSYYQPTYLYESTLNLIGLILILSLRHRKHLFKRGEIFLSYVIWYSAVRFFVEGMRTDSLYIANTIRVSQALSLILFFGAIILWIYRRKVVKPKWYLAGSGLKYPYNRD.

The next 4 helical transmembrane spans lie at 19–39, 49–69, 86–106, and 112–132; these read WYGILMATGVLVATLMAINEG, FIDFLLWAVPIGFIGARIYYV, IWNGGIAIYGGLIAGLIVLLI, and MLPPFLMLDIIAPGVMAAQVI. Arg134 provides a ligand contact to a 1,2-diacyl-sn-glycero-3-phospho-(1'-sn-glycerol). 3 helical membrane passes run 174–194, 204–224, and 235–255; these read QPTYLYESTLNLIGLILILSL, GEIFLSYVIWYSAVRFFVEGM, and IRVSQALSLILFFGAIILWIY.

This sequence belongs to the Lgt family.

It localises to the cell membrane. The catalysed reaction is L-cysteinyl-[prolipoprotein] + a 1,2-diacyl-sn-glycero-3-phospho-(1'-sn-glycerol) = an S-1,2-diacyl-sn-glyceryl-L-cysteinyl-[prolipoprotein] + sn-glycerol 1-phosphate + H(+). The protein operates within protein modification; lipoprotein biosynthesis (diacylglyceryl transfer). Its function is as follows. Catalyzes the transfer of the diacylglyceryl group from phosphatidylglycerol to the sulfhydryl group of the N-terminal cysteine of a prolipoprotein, the first step in the formation of mature lipoproteins. In Lactobacillus johnsonii (strain CNCM I-12250 / La1 / NCC 533), this protein is Phosphatidylglycerol--prolipoprotein diacylglyceryl transferase.